The sequence spans 264 residues: Thiazole synthase (264 aa).

The active-site Schiff-base intermediate with DXP is lysine 106. 1-deoxy-D-xylulose 5-phosphate contacts are provided by residues glycine 167, 193 to 194 (AG), and 215 to 216 (NS).

This sequence belongs to the ThiG family. Homotetramer. Forms heterodimers with either ThiH or ThiS.

The protein resides in the cytoplasm. It catalyses the reaction [ThiS sulfur-carrier protein]-C-terminal-Gly-aminoethanethioate + 2-iminoacetate + 1-deoxy-D-xylulose 5-phosphate = [ThiS sulfur-carrier protein]-C-terminal Gly-Gly + 2-[(2R,5Z)-2-carboxy-4-methylthiazol-5(2H)-ylidene]ethyl phosphate + 2 H2O + H(+). Its pathway is cofactor biosynthesis; thiamine diphosphate biosynthesis. Functionally, catalyzes the rearrangement of 1-deoxy-D-xylulose 5-phosphate (DXP) to produce the thiazole phosphate moiety of thiamine. Sulfur is provided by the thiocarboxylate moiety of the carrier protein ThiS. In vitro, sulfur can be provided by H(2)S. The protein is Thiazole synthase of Prochlorococcus marinus (strain MIT 9301).